We begin with the raw amino-acid sequence, 438 residues long: PHAF1 protein CG7083 (438 aa).

Belongs to the PHAF1 family.

The protein localises to the cytoplasm. It localises to the preautophagosomal structure. In terms of biological role, may play a regulatory role in autophagic activity. In Drosophila melanogaster (Fruit fly), this protein is PHAF1 protein CG7083.